Consider the following 369-residue polypeptide: 4-hydroxy-3-methylbut-2-en-1-yl diphosphate synthase (flavodoxin) (369 aa).

The [4Fe-4S] cluster site is built by Cys-270, Cys-273, Cys-305, and Glu-312.

The protein belongs to the IspG family. The cofactor is [4Fe-4S] cluster.

It catalyses the reaction (2E)-4-hydroxy-3-methylbut-2-enyl diphosphate + oxidized [flavodoxin] + H2O + 2 H(+) = 2-C-methyl-D-erythritol 2,4-cyclic diphosphate + reduced [flavodoxin]. It functions in the pathway isoprenoid biosynthesis; isopentenyl diphosphate biosynthesis via DXP pathway; isopentenyl diphosphate from 1-deoxy-D-xylulose 5-phosphate: step 5/6. Functionally, converts 2C-methyl-D-erythritol 2,4-cyclodiphosphate (ME-2,4cPP) into 1-hydroxy-2-methyl-2-(E)-butenyl 4-diphosphate. This Pseudomonas savastanoi pv. phaseolicola (strain 1448A / Race 6) (Pseudomonas syringae pv. phaseolicola (strain 1448A / Race 6)) protein is 4-hydroxy-3-methylbut-2-en-1-yl diphosphate synthase (flavodoxin).